Reading from the N-terminus, the 300-residue chain is Transcription termination/antitermination protein NusG (300 aa).

The segment at 1-99 (MSDPNVNDAI…EAEEPELDPI (99 aa)) is disordered. Acidic residues-rich tracts occupy residues 14-41 (ESVE…EAAD) and 47-97 (ETDE…PELD).

Belongs to the NusG family.

Its function is as follows. Participates in transcription elongation, termination and antitermination. This Streptomyces coelicolor (strain ATCC BAA-471 / A3(2) / M145) protein is Transcription termination/antitermination protein NusG.